A 356-amino-acid chain; its full sequence is Nucleosome assembly protein 1;4 (356 aa).

Residues 34-88 (VNALKNKLQNLAGQHSDILETLTPQVRKRVDVLRELQSQHDELESHFFEERAALE) adopt a coiled-coil conformation. Positions 55-70 (LTPQVRKRVDVLRELQ) match the Nuclear export signal motif. Positions 230-235 (KKKPKK) match the Nuclear localization signal motif. Positions 304 to 356 (FTGEAAEGDEFEDIEDDDDDDDDDDDEDDEDEEDEDDEEEEKSKKKSSALKVE) are disordered. A compositionally biased stretch (acidic residues) spans 309–343 (AEGDEFEDIEDDDDDDDDDDDEDDEDEEDEDDEEE). Over residues 347-356 (KKKSSALKVE) the composition is skewed to basic residues.

Belongs to the nucleosome assembly protein (NAP) family. In terms of assembly, can form homomeric and heteromeric protein complexes with NAP1;3. Binds histones H2A and H2B in vivo. Also able to bind histones H1 and H4 in vitro. Interacts with CYCB1;1 and with alpha tubulin.

It localises to the nucleus. The protein resides in the cytoplasm. Functionally, may modulate chromatin structure by regulation of nucleosome assembly/disassembly. Could function together with B-type cyclins in the regulation of microtubule dynamics. This is Nucleosome assembly protein 1;4 (NAP1;4) from Nicotiana tabacum (Common tobacco).